The chain runs to 134 residues: Methylglyoxal synthase (134 aa).

The region spanning 1–134 (MHIALIAHDE…DWRDLRRNDE (134 aa)) is the MGS-like domain. Substrate contacts are provided by residues H8, K12, 34-37 (TGTT), and 54-55 (SG). D60 acts as the Proton donor/acceptor in catalysis. Residue H87 coordinates substrate.

Belongs to the methylglyoxal synthase family.

It catalyses the reaction dihydroxyacetone phosphate = methylglyoxal + phosphate. In terms of biological role, catalyzes the formation of methylglyoxal from dihydroxyacetone phosphate. The chain is Methylglyoxal synthase from Listeria monocytogenes serotype 4b (strain CLIP80459).